The chain runs to 259 residues: Ribosomal RNA small subunit methyltransferase A (259 aa).

S-adenosyl-L-methionine-binding residues include Asn13, Leu15, Gly40, Glu61, Asp85, and Asn103.

The protein belongs to the class I-like SAM-binding methyltransferase superfamily. rRNA adenine N(6)-methyltransferase family. RsmA subfamily.

It localises to the cytoplasm. It catalyses the reaction adenosine(1518)/adenosine(1519) in 16S rRNA + 4 S-adenosyl-L-methionine = N(6)-dimethyladenosine(1518)/N(6)-dimethyladenosine(1519) in 16S rRNA + 4 S-adenosyl-L-homocysteine + 4 H(+). In terms of biological role, specifically dimethylates two adjacent adenosines (A1518 and A1519) in the loop of a conserved hairpin near the 3'-end of 16S rRNA in the 30S particle. May play a critical role in biogenesis of 30S subunits. This is Ribosomal RNA small subunit methyltransferase A from Neisseria gonorrhoeae (strain NCCP11945).